The sequence spans 254 residues: 3-deoxy-manno-octulosonate cytidylyltransferase (254 aa).

It belongs to the KdsB family.

The protein resides in the cytoplasm. The catalysed reaction is 3-deoxy-alpha-D-manno-oct-2-ulosonate + CTP = CMP-3-deoxy-beta-D-manno-octulosonate + diphosphate. It participates in nucleotide-sugar biosynthesis; CMP-3-deoxy-D-manno-octulosonate biosynthesis; CMP-3-deoxy-D-manno-octulosonate from 3-deoxy-D-manno-octulosonate and CTP: step 1/1. It functions in the pathway bacterial outer membrane biogenesis; lipopolysaccharide biosynthesis. Activates KDO (a required 8-carbon sugar) for incorporation into bacterial lipopolysaccharide in Gram-negative bacteria. This is 3-deoxy-manno-octulosonate cytidylyltransferase from Chlamydia pneumoniae (Chlamydophila pneumoniae).